The primary structure comprises 187 residues: Elongation factor P (187 aa).

This sequence belongs to the elongation factor P family.

It is found in the cytoplasm. The protein operates within protein biosynthesis; polypeptide chain elongation. Its function is as follows. Involved in peptide bond synthesis. Stimulates efficient translation and peptide-bond synthesis on native or reconstituted 70S ribosomes in vitro. Probably functions indirectly by altering the affinity of the ribosome for aminoacyl-tRNA, thus increasing their reactivity as acceptors for peptidyl transferase. This chain is Elongation factor P, found in Mycoplasmopsis agalactiae (strain NCTC 10123 / CIP 59.7 / PG2) (Mycoplasma agalactiae).